The following is a 373-amino-acid chain: ATP-dependent 6-phosphofructokinase (373 aa).

ATP-binding positions include glycine 12, 74 to 75 (RD), and 110 to 113 (GGGT). Substrate-binding positions include 133–135 (TID), arginine 170, 177–179 (MGH), glutamate 230, arginine 291, and 297–300 (YVQR). The Proton acceptor role is filled by aspartate 135.

The protein belongs to the phosphofructokinase type A (PFKA) family. Mixed-substrate PFK group III subfamily. In terms of assembly, homodimer or homotetramer. Requires Mg(2+) as cofactor.

The protein resides in the cytoplasm. The catalysed reaction is beta-D-fructose 6-phosphate + ATP = beta-D-fructose 1,6-bisphosphate + ADP + H(+). Its pathway is carbohydrate degradation; glycolysis; D-glyceraldehyde 3-phosphate and glycerone phosphate from D-glucose: step 3/4. Catalyzes the phosphorylation of D-fructose 6-phosphate to fructose 1,6-bisphosphate by ATP, the first committing step of glycolysis. In Propionibacterium freudenreichii subsp. shermanii (strain ATCC 9614 / DSM 4902 / CIP 103027 / NCIMB 8099 / CIRM-BIA1), this protein is ATP-dependent 6-phosphofructokinase.